A 442-amino-acid polypeptide reads, in one-letter code: Elongation factor 1-gamma (442 aa).

A GST N-terminal domain is found at 2 to 87; sequence AAGTLYTYPE…YLSNDVLRGS (86 aa). Residues 88 to 216 form the GST C-terminal domain; it reads TPQASAQVLQ…VKLCEKMAQF (129 aa). 2 stretches are compositionally biased toward basic and acidic residues: residues 227–242 and 249–263; these read KKEA…KEGG and QEKK…KAAP. Positions 227 to 273 are disordered; that stretch reads KKEAPIKKEKGGKEGGKQQPQQQEKKEKKKEEKKAAPAEEEMDECEA. Residues 281-442 enclose the EF-1-gamma C-terminal domain; it reads AKDPFAHLPK…KPFNQGKIFK (162 aa).

EF-1 is composed of four subunits: alpha, beta, delta, and gamma.

Functionally, probably plays a role in anchoring the complex to other cellular components. This chain is Elongation factor 1-gamma (eef1g), found in Danio rerio (Zebrafish).